We begin with the raw amino-acid sequence, 646 residues long: Depudecin biosynthesis cluster-specific transcription activator DEP6 (646 aa).

A DNA-binding region (zn(2)-C6 fungal-type) is located at residues cysteine 16–cysteine 43. 2 disordered regions span residues threonine 76 to glutamine 130 and lysine 345 to proline 366. The span at serine 349–glycine 360 shows a compositional bias: polar residues.

It is found in the nucleus. Functionally, transcription factor that positively regulates the expression of the gene cluster that mediates the biosynthesis of depudecin, a highly oxidized eleven-carbon linear polyketide that acts as a histone deacetylase (HDAC) inhibitor and makes a small contribution to pathogenesis. This chain is Depudecin biosynthesis cluster-specific transcription activator DEP6, found in Alternaria brassicicola (Dark leaf spot agent).